The primary structure comprises 248 residues: Meiotic drive suppressor wtf1 (248 aa).

The interval 30 to 68 (LLPEYNSDEESTLPPYSDHARVSNPPNTHRENHSSGTTD) is disordered. Transmembrane regions (helical) follow at residues 73–93 (FLIK…PAVC), 110–130 (WTLI…SWYF), 152–172 (IPMA…PRVT), and 186–206 (SLAD…VETV).

The protein belongs to the WTF family. As to quaternary structure, homomer. Interacts with other proteins that exhibit high sequence similarity.

The protein localises to the spore membrane. Its subcellular location is the vacuole membrane. Its function is as follows. Acts as a suppressor component of the dual wtf meiotic drive system, and can suppress but not confer meiotic drive by compatible poisons. Wtf meiotic drive systems promote unequal transmission of alleles from the parental zygote to progeny spores by encoding a poison and an antidote from the same locus; the poison is trans-acting and forms toxic aggregates in all spores within an ascus, wherease the antidote is spore-specific and targets aggregates for degradation by the vacuole. Meiotic drive by wtf systems therefore lead to poisoning of all progeny that do not inherit the dual poison/antidote allele, or express a compatible antidote. The protein is Meiotic drive suppressor wtf1 of Schizosaccharomyces pombe (Fission yeast).